Reading from the N-terminus, the 1101-residue chain is Coiled-coil domain-containing protein 150 (1101 aa).

Coiled coils occupy residues 106–299 (RLES…DLTS), 398–680 (AAHA…KEDN), 712–940 (DSEI…NYEQ), and 970–1033 (VRNK…EAHR). The segment covering 1055–1071 (SGEDRWQEKDQDVKHDV) has biased composition (basic and acidic residues). The segment at 1055-1101 (SGEDRWQEKDQDVKHDVMSNQSVLHRWERKQNLRPMPKKYHSEVQRK) is disordered.

The polypeptide is Coiled-coil domain-containing protein 150 (CCDC150) (Homo sapiens (Human)).